The primary structure comprises 228 residues: Apoptosis regulator R1 (228 aa).

The segment covering 1 to 21 (LNPKKKENNGVKNGDREKQHE) has biased composition (basic and acidic residues). The segment at 1-29 (LNPKKKENNGVKNGDREKQHETGNTIFRG) is disordered. Residues 120–139 (SLFQGGVNWGRIVAFFVFGA) carry the BH1 motif. Positions 171–186 (DWIQSNGGWNGFLTLY) match the BH2 motif. The chain crosses the membrane as a helical span at residues 207–227 (TVLTGAVALGALMTVGALFAS).

It belongs to the Bcl-2 family.

The protein localises to the membrane. In terms of biological role, could be the homolog of mammalian Bcl-W. The chain is Apoptosis regulator R1 from Xenopus laevis (African clawed frog).